Here is a 278-residue protein sequence, read N- to C-terminus: DNA repair protein RecO (278 aa).

Polar residues predominate over residues 1–12 (MGTNDALTSTED). The disordered stretch occupies residues 1-42 (MGTNDALTSTEDAVTAGANDAPLPAPPEPPRKARRATSRTSD).

The protein belongs to the RecO family.

Involved in DNA repair and RecF pathway recombination. The protein is DNA repair protein RecO of Burkholderia lata (strain ATCC 17760 / DSM 23089 / LMG 22485 / NCIMB 9086 / R18194 / 383).